The sequence spans 160 residues: Probable transcriptional regulator YgiV (160 aa).

Represses expression of mcbR. The chain is Probable transcriptional regulator YgiV (ygiV) from Escherichia coli (strain K12).